Here is a 434-residue protein sequence, read N- to C-terminus: Enolase (434 aa).

Gln163 is a binding site for (2R)-2-phosphoglycerate. Glu205 functions as the Proton donor in the catalytic mechanism. Residues Asp242, Glu291, and Asp318 each contribute to the Mg(2+) site. (2R)-2-phosphoglycerate is bound by residues Lys343, Arg372, Ser373, and Lys394. Residue Lys343 is the Proton acceptor of the active site.

The protein belongs to the enolase family. The cofactor is Mg(2+).

The protein resides in the cytoplasm. It localises to the secreted. The protein localises to the cell surface. It carries out the reaction (2R)-2-phosphoglycerate = phosphoenolpyruvate + H2O. The protein operates within carbohydrate degradation; glycolysis; pyruvate from D-glyceraldehyde 3-phosphate: step 4/5. Functionally, catalyzes the reversible conversion of 2-phosphoglycerate (2-PG) into phosphoenolpyruvate (PEP). It is essential for the degradation of carbohydrates via glycolysis. This chain is Enolase, found in Streptococcus sanguinis (strain SK36).